The chain runs to 312 residues: Olfactory receptor 10P22 (312 aa).

The Extracellular portion of the chain corresponds to 1-26; it reads MGDDNDTDITEFILLGFSGYGFLQGH. Asn-5 carries an N-linked (GlcNAc...) asparagine glycan. The helical transmembrane segment at 27 to 47 threads the bilayer; that stretch reads LFWGVLCIYVVTLLGNSLIVL. Topologically, residues 48–57 are cytoplasmic; that stretch reads LTLADSALHS. A helical membrane pass occupies residues 58 to 78; the sequence is PMYFFLRHFSVVEILYTTTIV. Over 79–89 the chain is Extracellular; the sequence is PRMLADLRSSC. Residues 90 to 110 traverse the membrane as a helical segment; sequence PTIPLASCFTQLYFFALFGIA. At 111 to 143 the chain is on the cytoplasmic side; the sequence is ECCLLTAMAYDRYAAICCPLHYTTLMSQGTYTG. A helical transmembrane segment spans residues 144–164; the sequence is LVGASYLAGVISGTTHSIFIF. At 165–205 the chain is on the extracellular side; that stretch reads TLPFRGAKTIHHFLCDILPVLRLATASTFWGEVGNLFVTIT. The helical transmembrane segment at 206–226 threads the bilayer; that stretch reads FIFVPFLLIVASYACILVTIL. At 227-236 the chain is on the cytoplasmic side; sequence GVATSQGRQK. The chain crosses the membrane as a helical span at residues 237 to 257; it reads LFSTCSSHLFVVILFFGTATV. The Extracellular portion of the chain corresponds to 258–271; the sequence is AYMRPQADSFGNTD. Residues 272–292 traverse the membrane as a helical segment; sequence QILTLVYTVVTPMCNPFVYSL. Topologically, residues 293–312 are cytoplasmic; the sequence is RNKEVTGAMRRLMKRYLWGP.

It belongs to the G-protein coupled receptor 1 family.

Its subcellular location is the cell membrane. In terms of biological role, odorant receptor. In Mus musculus (Mouse), this protein is Olfactory receptor 10P22.